The following is a 147-amino-acid chain: Putative pre-16S rRNA nuclease (147 aa).

It belongs to the YqgF nuclease family.

It is found in the cytoplasm. Functionally, could be a nuclease involved in processing of the 5'-end of pre-16S rRNA. The protein is Putative pre-16S rRNA nuclease of Ligilactobacillus salivarius (strain UCC118) (Lactobacillus salivarius).